The chain runs to 313 residues: 4-hydroxy-3-methylbut-2-enyl diphosphate reductase (313 aa).

Cysteine 13 lines the [4Fe-4S] cluster pocket. Residues histidine 41 and histidine 75 each contribute to the (2E)-4-hydroxy-3-methylbut-2-enyl diphosphate site. The dimethylallyl diphosphate site is built by histidine 41 and histidine 75. Positions 41 and 75 each coordinate isopentenyl diphosphate. Cysteine 97 contacts [4Fe-4S] cluster. Histidine 125 provides a ligand contact to (2E)-4-hydroxy-3-methylbut-2-enyl diphosphate. Dimethylallyl diphosphate is bound at residue histidine 125. Residue histidine 125 coordinates isopentenyl diphosphate. The Proton donor role is filled by glutamate 127. Threonine 168 is a binding site for (2E)-4-hydroxy-3-methylbut-2-enyl diphosphate. Cysteine 218 serves as a coordination point for [4Fe-4S] cluster. Residues serine 246, serine 247, asparagine 248, and serine 295 each coordinate (2E)-4-hydroxy-3-methylbut-2-enyl diphosphate. 4 residues coordinate dimethylallyl diphosphate: serine 246, serine 247, asparagine 248, and serine 295. Residues serine 246, serine 247, asparagine 248, and serine 295 each contribute to the isopentenyl diphosphate site.

The protein belongs to the IspH family. [4Fe-4S] cluster is required as a cofactor.

It carries out the reaction isopentenyl diphosphate + 2 oxidized [2Fe-2S]-[ferredoxin] + H2O = (2E)-4-hydroxy-3-methylbut-2-enyl diphosphate + 2 reduced [2Fe-2S]-[ferredoxin] + 2 H(+). It catalyses the reaction dimethylallyl diphosphate + 2 oxidized [2Fe-2S]-[ferredoxin] + H2O = (2E)-4-hydroxy-3-methylbut-2-enyl diphosphate + 2 reduced [2Fe-2S]-[ferredoxin] + 2 H(+). It participates in isoprenoid biosynthesis; dimethylallyl diphosphate biosynthesis; dimethylallyl diphosphate from (2E)-4-hydroxy-3-methylbutenyl diphosphate: step 1/1. Its pathway is isoprenoid biosynthesis; isopentenyl diphosphate biosynthesis via DXP pathway; isopentenyl diphosphate from 1-deoxy-D-xylulose 5-phosphate: step 6/6. Catalyzes the conversion of 1-hydroxy-2-methyl-2-(E)-butenyl 4-diphosphate (HMBPP) into a mixture of isopentenyl diphosphate (IPP) and dimethylallyl diphosphate (DMAPP). Acts in the terminal step of the DOXP/MEP pathway for isoprenoid precursor biosynthesis. The sequence is that of 4-hydroxy-3-methylbut-2-enyl diphosphate reductase from Chlorobium phaeovibrioides (strain DSM 265 / 1930) (Prosthecochloris vibrioformis (strain DSM 265)).